The sequence spans 447 residues: Teichoic acids export ATP-binding protein TagH (447 aa).

The ABC transporter domain occupies 24-246 (DKLKTLFSVF…YRAFLHRYNH (223 aa)). 60 to 67 (GLNGSGKS) lines the ATP pocket. The unknown stretch occupies residues 247–447 (FTEPQKESYQ…QVLKLKEVTE (201 aa)). The disordered stretch occupies residues 359–393 (NAVKTTKTKPASTKESRQQEEVQPSPTNVPENNNS). Composition is skewed to polar residues over residues 360–369 (AVKTTKTKPA) and 379–393 (EVQP…NNNS). A LysM domain is found at 398 to 442 (STYTVEVGDSVSLIAENHGLTIEQLQTLNPEIIEVPIYPGQVLKL).

It belongs to the ABC transporter superfamily. Teichoic acids exporter (TC 3.A.1.104.1) family. As to quaternary structure, the complex is composed of two ATP-binding proteins (TagH) and two transmembrane proteins (TagG).

The protein resides in the cell membrane. It catalyses the reaction ATP + H2O + teichoic acidSide 1 = ADP + phosphate + teichoic acidSide 2.. In terms of biological role, part of the ABC transporter complex TagGH involved in teichoic acids export. Responsible for energy coupling to the transport system. This is Teichoic acids export ATP-binding protein TagH from Enterococcus faecalis (strain ATCC 700802 / V583).